The primary structure comprises 186 residues: Elongation factor P (186 aa).

This sequence belongs to the elongation factor P family.

The protein resides in the cytoplasm. It functions in the pathway protein biosynthesis; polypeptide chain elongation. In terms of biological role, involved in peptide bond synthesis. Stimulates efficient translation and peptide-bond synthesis on native or reconstituted 70S ribosomes in vitro. Probably functions indirectly by altering the affinity of the ribosome for aminoacyl-tRNA, thus increasing their reactivity as acceptors for peptidyl transferase. This Enterococcus faecalis (strain ATCC 700802 / V583) protein is Elongation factor P.